Consider the following 428-residue polypeptide: ATP phosphoribosyltransferase regulatory subunit (428 aa).

This sequence belongs to the class-II aminoacyl-tRNA synthetase family. HisZ subfamily. As to quaternary structure, heteromultimer composed of HisG and HisZ subunits.

Its subcellular location is the cytoplasm. It functions in the pathway amino-acid biosynthesis; L-histidine biosynthesis; L-histidine from 5-phospho-alpha-D-ribose 1-diphosphate: step 1/9. Its function is as follows. Required for the first step of histidine biosynthesis. May allow the feedback regulation of ATP phosphoribosyltransferase activity by histidine. The polypeptide is ATP phosphoribosyltransferase regulatory subunit (Syntrophotalea carbinolica (strain DSM 2380 / NBRC 103641 / GraBd1) (Pelobacter carbinolicus)).